We begin with the raw amino-acid sequence, 275 residues long: NH(3)-dependent NAD(+) synthetase (275 aa).

ATP is bound at residue 46-53; that stretch reads GISGGQDS. Asp-52 provides a ligand contact to Mg(2+). Arg-140 contributes to the deamido-NAD(+) binding site. Residue Thr-160 participates in ATP binding. Glu-165 serves as a coordination point for Mg(2+). Lys-173 and Asp-180 together coordinate deamido-NAD(+). The ATP site is built by Lys-189 and Thr-211. 260 to 261 provides a ligand contact to deamido-NAD(+); it reads HK.

The protein belongs to the NAD synthetase family. In terms of assembly, homodimer.

It carries out the reaction deamido-NAD(+) + NH4(+) + ATP = AMP + diphosphate + NAD(+) + H(+). It functions in the pathway cofactor biosynthesis; NAD(+) biosynthesis; NAD(+) from deamido-NAD(+) (ammonia route): step 1/1. In terms of biological role, catalyzes the ATP-dependent amidation of deamido-NAD to form NAD. Uses ammonia as a nitrogen source. The chain is NH(3)-dependent NAD(+) synthetase from Salmonella agona (strain SL483).